Reading from the N-terminus, the 140-residue chain is Phospholipase A2 (140 aa).

The first 21 residues, 1–21, serve as a signal peptide directing secretion; that stretch reads MNPAHLLVLAAVCISLSGASS. Residues 22–27 constitute a propeptide that is removed on maturation; the sequence is IAPQPL. Disulfide bonds link C38–C97, C52–C139, C54–C70, C69–C125, C76–C118, C86–C111, and C104–C116. N-linked (GlcNAc...) asparagine glycosylation occurs at N39. The Ca(2+) site is built by Y53, G55, and G57. H73 is an active-site residue. Ca(2+) is bound at residue D74. A glycan (N-linked (GlcNAc...) asparagine) is linked at N107. Residue D119 is part of the active site.

This sequence belongs to the phospholipase A2 family. Group I subfamily. D49 sub-subfamily. Ca(2+) serves as cofactor. Expressed by the venom gland.

Its subcellular location is the secreted. It carries out the reaction a 1,2-diacyl-sn-glycero-3-phosphocholine + H2O = a 1-acyl-sn-glycero-3-phosphocholine + a fatty acid + H(+). In terms of biological role, PLA2 catalyzes the calcium-dependent hydrolysis of the 2-acyl groups in 3-sn-phosphoglycerides. The polypeptide is Phospholipase A2 (Micrurus altirostris (Uruguayan coral snake)).